Here is a 151-residue protein sequence, read N- to C-terminus: Large ribosomal subunit protein bL9 (151 aa).

It belongs to the bacterial ribosomal protein bL9 family.

Its function is as follows. Binds to the 23S rRNA. This chain is Large ribosomal subunit protein bL9, found in Prochlorococcus marinus (strain MIT 9301).